The primary structure comprises 565 residues: Periplasmic trehalase (565 aa).

The N-terminal stretch at 1-30 (MKSPAPSRPQKMALIPACIFLCFAALSVQA) is a signal peptide. Substrate is bound by residues R152, 159-160 (WD), N196, 205-207 (RSQ), 277-279 (RPE), and G310. Residues D312 and E496 each act as proton donor/acceptor in the active site. E511 serves as a coordination point for substrate. A disordered region spans residues 540 to 565 (DNVPATHPTVKSATTQPSTKEAQPTP). Polar residues predominate over residues 548–565 (TVKSATTQPSTKEAQPTP).

This sequence belongs to the glycosyl hydrolase 37 family. In terms of assembly, monomer.

It localises to the periplasm. The catalysed reaction is alpha,alpha-trehalose + H2O = alpha-D-glucose + beta-D-glucose. Functionally, provides the cells with the ability to utilize trehalose at high osmolarity by splitting it into glucose molecules that can subsequently be taken up by the phosphotransferase-mediated uptake system. This Shigella flexneri protein is Periplasmic trehalase.